The sequence spans 425 residues: Trigger factor (425 aa).

A PPIase FKBP-type domain is found at 158–231; that stretch reads GDLVRVNMEV…VEEVYKRTLP (74 aa).

This sequence belongs to the FKBP-type PPIase family. Tig subfamily.

It is found in the cytoplasm. The catalysed reaction is [protein]-peptidylproline (omega=180) = [protein]-peptidylproline (omega=0). Functionally, involved in protein export. Acts as a chaperone by maintaining the newly synthesized protein in an open conformation. Functions as a peptidyl-prolyl cis-trans isomerase. In Thermotoga petrophila (strain ATCC BAA-488 / DSM 13995 / JCM 10881 / RKU-1), this protein is Trigger factor.